Reading from the N-terminus, the 476-residue chain is ATP synthase subunit beta (476 aa).

Gly-154–Thr-161 contacts ATP.

It belongs to the ATPase alpha/beta chains family. F-type ATPases have 2 components, CF(1) - the catalytic core - and CF(0) - the membrane proton channel. CF(1) has five subunits: alpha(3), beta(3), gamma(1), delta(1), epsilon(1). CF(0) has four main subunits: a(1), b(1), b'(1) and c(9-12).

Its subcellular location is the cell inner membrane. It carries out the reaction ATP + H2O + 4 H(+)(in) = ADP + phosphate + 5 H(+)(out). Its function is as follows. Produces ATP from ADP in the presence of a proton gradient across the membrane. The catalytic sites are hosted primarily by the beta subunits. The sequence is that of ATP synthase subunit beta from Rhodopseudomonas palustris (strain ATCC BAA-98 / CGA009).